The sequence spans 1241 residues: Interphotoreceptor matrix proteoglycan 2 (1241 aa).

The signal sequence occupies residues 1–22 (MIMFPLFGKISLGILIFVLIEG). The Extracellular portion of the chain corresponds to 23–1099 (DFPSLTAQTY…KHCEEFVSEP (1077 aa)). Asparagine 154 carries N-linked (GlcNAc...) asparagine glycosylation. The disordered stretch occupies residues 180 to 223 (ELSSPVPVGDTSTLGDTTLSVPHPEVDAYEGASESSLERPEESI). The span at 189 to 199 (DTSTLGDTTLS) shows a compositional bias: polar residues. Threonine 190 and threonine 192 each carry an O-linked (GalNAc...) threonine glycan. The SEA 1 domain occupies 239 to 353 (GEQIAEFSIH…KPTVVYTISN (115 aa)). The hyaluronan-binding motif involved in chondroitin sulfate A-binding stretch occupies residues 259-267 (QDSSSFHHQ). Asparagine 301, asparagine 320, and asparagine 370 each carry an N-linked (GlcNAc...) asparagine glycan. Threonine 544 and threonine 556 each carry an O-linked (GalNAc...) threonine glycan. Basic and acidic residues predominate over residues 660 to 678 (QISKHSKYEHDDRSTHFPE). Residues 660–684 (QISKHSKYEHDDRSTHFPEEEPLSG) form a disordered region. The SEA 2 domain maps to 897–1010 (GALVVFFSLR…YSLDVESGDE (114 aa)). Asparagine 942 and asparagine 956 each carry an N-linked (GlcNAc...) asparagine glycan. 2 consecutive EGF-like domains span residues 1010-1051 (EANP…RPCQ) and 1052-1093 (SLCD…KHCE). Cystine bridges form between cysteine 1014-cysteine 1025, cysteine 1019-cysteine 1036, cysteine 1038-cysteine 1050, cysteine 1054-cysteine 1067, cysteine 1061-cysteine 1077, and cysteine 1079-cysteine 1092. Positions 1080–1088 (RVGENWWYR) are hyaluronan-binding motif involved in chondroitin sulfate C-binding. A helical transmembrane segment spans residues 1100 to 1120 (VIIGITIASVVGLLVIFSAII). At 1121–1241 (YFFIRTLQAH…FVREQQVEEV (121 aa)) the chain is on the cytoplasmic side. The interval 1125-1133 (RTLQAHHDR) is hyaluronan-binding motif involved in chondroitin sulfate A- and C-binding. Residues 1136–1145 (RESPFSGSSR) are hyaluronan-binding motif involved in chondroitin sulfate C-binding. The interval 1210-1218 (REEIQERMR) is hyaluronan-binding motif involved in chondroitin sulfate A- and C-binding motif.

Highly glycosylated (N- and O-linked carbohydrates). As to expression, expressed in the retina (at protein level). Expressed by photoreceptors of the interphotoreceptor matrix (IPM) surrounding both rods and cones (at protein level). IPM occupies the subretinal space between the apices of the retinal pigment epithelium and the neural retina. Expressed in the pineal gland (at protein level).

It localises to the photoreceptor outer segment membrane. The protein resides in the photoreceptor inner segment membrane. Its subcellular location is the secreted. The protein localises to the extracellular space. It is found in the extracellular matrix. It localises to the interphotoreceptor matrix. Functionally, chondroitin sulfate- and hyaluronan-binding proteoglycan involved in the organization of interphotoreceptor matrix; may participate in the maturation and maintenance of the light-sensitive photoreceptor outer segment. Binds heparin. In Homo sapiens (Human), this protein is Interphotoreceptor matrix proteoglycan 2 (IMPG2).